A 21-amino-acid chain; its full sequence is Dahlein-5.5 (21 aa).

In terms of tissue distribution, expressed by the skin dorsal glands.

The protein resides in the secreted. In terms of biological role, has no antimicrobial activity. Strongly inhibits the formation of NO by neuronal nitric oxide synthase at micromolar concentrations. In Ranoidea dahlii (Dahl's aquatic frog), this protein is Dahlein-5.5.